The primary structure comprises 648 residues: ATP-dependent zinc metalloprotease FtsH 4 (648 aa).

The Cytoplasmic portion of the chain corresponds to 1–6; that stretch reads MKQSHK. Residues 7–27 traverse the membrane as a helical segment; that stretch reads TLLLWVLLIMMFLAIWQFLSP. The Periplasmic segment spans residues 28-111; the sequence is DSRPATQVAF…VFFEKEDTSP (84 aa). Residues 112–132 traverse the membrane as a helical segment; that stretch reads FWPGAIMYLLPTVFLLVMFYL. Over 133-648 the chain is Cytoplasmic; that stretch reads FMRQLQAGGG…FGTPKPAPST (516 aa). 205 to 212 provides a ligand contact to ATP; it reads GPPGTGKT. Histidine 427 is a Zn(2+) binding site. Residue glutamate 428 is part of the active site. Positions 431 and 504 each coordinate Zn(2+). The segment at 622–648 is disordered; that stretch reads YSDRDRAAKEKRRAASIFGTPKPAPST.

This sequence in the central section; belongs to the AAA ATPase family. The protein in the C-terminal section; belongs to the peptidase M41 family. In terms of assembly, homohexamer. Requires Zn(2+) as cofactor.

The protein localises to the cell inner membrane. In terms of biological role, acts as a processive, ATP-dependent zinc metallopeptidase for both cytoplasmic and membrane proteins. Plays a role in the quality control of integral membrane proteins. The protein is ATP-dependent zinc metalloprotease FtsH 4 of Sorangium cellulosum (strain So ce56) (Polyangium cellulosum (strain So ce56)).